Here is a 421-residue protein sequence, read N- to C-terminus: Tyrosine--tRNA ligase (421 aa).

Residue Tyr38 coordinates L-tyrosine. The 'HIGH' region signature appears at 43–52 (PTGDSLHIGH). Residues Tyr169 and Gln173 each coordinate L-tyrosine. Residues 231–235 (KFGKS) carry the 'KMSKS' region motif. Residue Lys234 coordinates ATP. The region spanning 353–419 (KNLVDFLVDT…GKKKYTLVHI (67 aa)) is the S4 RNA-binding domain.

The protein belongs to the class-I aminoacyl-tRNA synthetase family. TyrS type 1 subfamily. In terms of assembly, homodimer.

It is found in the cytoplasm. It catalyses the reaction tRNA(Tyr) + L-tyrosine + ATP = L-tyrosyl-tRNA(Tyr) + AMP + diphosphate + H(+). Functionally, catalyzes the attachment of tyrosine to tRNA(Tyr) in a two-step reaction: tyrosine is first activated by ATP to form Tyr-AMP and then transferred to the acceptor end of tRNA(Tyr). The protein is Tyrosine--tRNA ligase of Lactobacillus delbrueckii subsp. bulgaricus (strain ATCC BAA-365 / Lb-18).